The following is a 212-amino-acid chain: HTH-type transcriptional regulatory protein RaaS (212 aa).

The HTH tetR-type domain occupies 6–65 (LTAHARIREAAIEQFGRHGFGVGLRAIAEAAGVSAALVIHHFGSKEGLRKACDDFVAEEI). The H-T-H motif DNA-binding region spans 28 to 47 (GLRAIAEAAGVSAALVIHHF).

Homodimer. Interacts with long chain acyl-CoA derivatives. Interacts with several drugs such rhodamine 6G, ethidium and safranin O.

Its activity is regulated as follows. Interaction with long chain acyl-CoA derivatives (oleoyl-CoA and, to lesser extent, stearoyl-CoA) prevents binding to DNA, leading to the expression of the target genes. Long chain acyl-CoA derivatives may serve as biological indicators of the bacterial metabolic state. Its function is as follows. Regulates the expression of the Rv1217c-Rv1218c multidrug efflux system and its own expression. Acts by binding to promoter regions of Rv1219c and upstream of the Rv1218c gene. Important for survival in prolonged stationary phase and during macrophage infection. May be used to eliminate non-growing mycobacteria. The polypeptide is HTH-type transcriptional regulatory protein RaaS (Mycobacterium tuberculosis (strain ATCC 25618 / H37Rv)).